We begin with the raw amino-acid sequence, 89 residues long: UPF0237 protein lin0537 (89 aa).

The 75-residue stretch at 4–78 (VLTVIGKDNV…EELQVKIHIQ (75 aa)) folds into the ACT domain.

The protein belongs to the UPF0237 family.

The sequence is that of UPF0237 protein lin0537 from Listeria innocua serovar 6a (strain ATCC BAA-680 / CLIP 11262).